Here is a 671-residue protein sequence, read N- to C-terminus: Zinc finger and BTB domain-containing protein 16-A (671 aa).

The BTB domain occupies 34–96; it reads CDVVIMVDSQ…AYTATLQAKV (63 aa). Disordered stretches follow at residues 130-167 and 248-289; these read ENDT…TEES and VDES…RSSV. Basic and acidic residues predominate over residues 270–279; sequence RSGEPDKNRD. At threonine 283 the chain carries Phosphothreonine. C2H2-type zinc fingers lie at residues 401–423, 429–451, 458–480, 487–509, 515–537, 544–566, 572–594, 600–622, and 628–650; these read ERCN…RKLH, YGCE…LLSH, IVCD…RQIH, IFCL…MEVH, YICS…LRSH, FECE…KRIH, YECN…YRVH, FECK…LRTH, and YQCT…MKGH.

The protein belongs to the krueppel C2H2-type zinc-finger protein family. As to quaternary structure, interacts with btbd6a (via BTB domain). Polyubiquitinated, leading to its proteasomal degradation. During early stages of primary neurogenesis, expressed in the neural epithelium, with highest levels in the forebrain and midbrain. Also expressed in a posterior-to-anterior gradient in the caudal neural plate at the 3-6 somite stage.

Its subcellular location is the nucleus. It is found in the cytoplasm. It participates in protein modification; protein ubiquitination. Its function is as follows. Probable transcription factor. Probable substrate-recognition component of an E3 ubiquitin-protein ligase complex which mediates the ubiquitination and subsequent proteasomal degradation of target proteins. Inhibits neurogenesis. This Danio rerio (Zebrafish) protein is Zinc finger and BTB domain-containing protein 16-A.